A 198-amino-acid polypeptide reads, in one-letter code: MDNNYLNYYNVFEEFDAGAGIKEKELFTEEQQLSFLPKKGLGNGGFDGVERLYSNIINNNDIKSLLALIMLVFAINTNSLVALIFIILSAIFVPVPALIIAYCIALHLKNGSDATHVGISILLMLASAVTIYLTSTSKISKGFKRAIDVVLLVILGFYIVKIYGIDRQISIPSRRYCRQMSGPSSLENLNAFQTHSNY.

At 1–55 the chain is on the virion surface side; that stretch reads MDNNYLNYYNVFEEFDAGAGIKEKELFTEEQQLSFLPKKGLGNGGFDGVERLYSN. The helical transmembrane segment at 56–76 threads the bilayer; that stretch reads IINNNDIKSLLALIMLVFAIN. Residues 77–145 are Intravirion-facing; the sequence is TNSLVALIFI…TSKISKGFKR (69 aa). The chain crosses the membrane as a helical span at residues 146 to 166; sequence AIDVVLLVILGFYIVKIYGID. At 167-198 the chain is on the virion surface side; it reads RQISIPSRRYCRQMSGPSSLENLNAFQTHSNY. Position 198 is a phosphotyrosine (Y198).

The protein belongs to the chordopoxvirinae A17 family. As to quaternary structure, interacts (via N-terminus) with D13 scaffold; this interaction helps D13 to associate with membranes. Interacts with A14. Interacts with A27; this interaction allows A27 to be anchored in the mature virion (MV) membrane. Part of a complex composed of A17, A25, A26 and A27. The 22 kDa precursor is probably cleaved by the I7 protease during virus maturation. Post-translationally, phosphorylated on tyrosine and threonine. Its phosphorylation state is regulated by the F10 kinase and the H1 phosphatase. Phosphorylation by F10 kinase seems to be required to form the membranes associated with IV.

It is found in the virion membrane. Its function is as follows. Envelope protein which participates in virus morphogenesis. Needed for an early step in viral crescent membrane formation by interacting with D13 scaffold protein. Its interaction with D13 scaffold protein leads to the formation of rigid, crescent-shaped membranes that assemble around the cytoplasmic virus factory. Membrane anchor for the protein A27. A17-A27 virus envelope protein might be involved in fusion or attachment, and can further associate to A26. This chain is Virion membrane protein A17 precursor homolog, found in Fowlpox virus (strain NVSL) (FPV).